The following is a 148-amino-acid chain: Large ribosomal subunit protein uL15 (148 aa).

The disordered stretch occupies residues 1-51 (MNLSSLKPAEGAVKSRKRIGRGPGSGLGGTSTRGHKGAKSRSGYSKKIGFE). Gly residues predominate over residues 21–31 (RGPGSGLGGTS).

It belongs to the universal ribosomal protein uL15 family. As to quaternary structure, part of the 50S ribosomal subunit.

Binds to the 23S rRNA. The polypeptide is Large ribosomal subunit protein uL15 (Porphyromonas gingivalis (strain ATCC 33277 / DSM 20709 / CIP 103683 / JCM 12257 / NCTC 11834 / 2561)).